Reading from the N-terminus, the 245-residue chain is MKLFVYHTPELTPKDQVPDCAIAVDVLRATSTIATVLSAGGEAVQVFSDLDELIAVSEAWPPQKRLRAGERGGGKVTGFELGNSPLDCTPELVEGRRLFISTTNGTRALKRVQDSATVLTAAFINRAAVVQYLLEKQPEIVWIVGSGWEGSYSLEDTACAGAIAHSVVEKSQLPPEELAGNDEVISAIALYSQWQNNLLGLFHHASHGKRLLRLECYEDLKYCSQTDVLTVLPIQQEAGVFKTKN.

Belongs to the ComB family. It depends on Mg(2+) as a cofactor.

The enzyme catalyses (2R)-O-phospho-3-sulfolactate + H2O = (2R)-3-sulfolactate + phosphate. The protein is Probable 2-phosphosulfolactate phosphatase of Nostoc sp. (strain PCC 7120 / SAG 25.82 / UTEX 2576).